The chain runs to 260 residues: HTH-type transcriptional activator FapR (260 aa).

Positions 154 to 251 (ERIVTLLFSD…GVTPKKFEIG (98 aa)) constitute an HTH araC/xylS-type domain. 2 DNA-binding regions (H-T-H motif) span residues 171-192 (SDIA…EQEC) and 218-241 (IGMI…KEYY).

As to quaternary structure, homodimer.

Functionally, positive regulator of the expression of the 987P operon for the fimbrial protein in enterotoxigenic E.coli. The chain is HTH-type transcriptional activator FapR from Escherichia coli.